The primary structure comprises 786 residues: MGSGGVVHCRCAKCFCYPTKRRIRRRPRNLTILSLPEDVLFHILKWLSVEDILAVRAVHSQLKDLVDNHASVWACASFQELWPSPGNLKLFERAAEKGNFEAAVKLGIAYLYNEGLSVSDEARAEVNGLKASRFFSLAERLNVGAAPFIWLFIRPPWSVSGSCCKAVVHESLRAECQLQRTHKASILHCLGRVLSLFEDEEKQQQAHDLFEEAAHQGCLTSSYLLWESDRRTDVSDPGRCLHSFRKLRDYAAKGCWEAQLSLAKACANANQLGLEVRASSEIVCQLFQASQAVSKQQVFSVQKGLNDTMRYILIDWLVEVATMKDFTSLCLHLTVECVDRYLRRRLVPRYRLQLLGIACMVICTRFISKEILTIREAVWLTDNTYKYEDLVRMMGEIVSALEGKIRVPTVVDYKEVLLTLVPVELRTQHLCSFLCELSLLHTSLSAYAPARLAAAALLLARLTHGQTQPWTTQLWDLTGFSYEDLIPCVLSLHKKCFHDDAPKDYRQVSLTAVKQRFEDKRYGEISQEEVLSYSQLCAALGVTQDSPDPPTFLSTGEIHAFLSSPSGRRTKRKRENSLQEDRGSFVTTPTAELSSQEETLLGSFLDWSLDCCSGYEGDQESEGEKEGDVTAPSGILDVTVVYLNPEQHCCQESSDEEACPEDKGPQDPQALALDTQIPATPGPKPLVRTSREPGKDVTTSGYSSVSTASPTSSVDGGLGALPQPTSVLSLDSDSHTQPCHHQARKSCLQCRPPSPPESSVPQQQVKRINLCIHSEEEDMNLGLVRL.

The Nuclear localization signal 1 signature appears at 20-28 (KRRIRRRPR). The F-box domain occupies 29-76 (NLTILSLPEDVLFHILKWLSVEDILAVRAVHSQLKDLVDNHASVWACA). Residues 288 to 405 (QASQAVSKQQ…EIVSALEGKI (118 aa)) enclose the Cyclin N-terminal domain. 4 short sequence motifs (d box) span residues 310-313 (RYIL), 343-346 (RRRL), 349-352 (RYRL), and 351-354 (RLQL). 2 disordered regions span residues 564-593 (SPSGRRTKRKRENSLQEDRGSFVTTPTAEL) and 675-738 (TQIP…HTQP). The short motif at 568-574 (RRTKRKR) is the Nuclear localization signal 2 element. Residues 582-766 (RGSFVTTPTA…ESSVPQQQVK (185 aa)) are PEST. Low complexity predominate over residues 697 to 714 (VTTSGYSSVSTASPTSSV). A compositionally biased stretch (polar residues) spans 723 to 738 (QPTSVLSLDSDSHTQP). A D box 5 motif is present at residues 767–770 (RINL).

This sequence belongs to the cyclin family. Cyclin AB subfamily. As to quaternary structure, component of the SCF(CCNF) complex consisting of CUL1, RBX1, SKP1 and CCNF. Interacts with SKP1. Interacts with CUL1. Interacts with CCNB1; interaction is required for nuclear localization of CCNB1. Interacts with CCP110; this interaction leads to CCP110 ubiquitination and degradation via the proteasome pathway. Interacts (via the Cyclin N-terminal domain) with MYBL2/BMYB. Interacts with FZR1/CDH1 (via N-terminus). Interacts with RRM2 (via Cy motif and when phosphorylated at 'Thr-33'); the interaction occurs exclusively in G2 and early M. Interacts with CDC6 (via Cy motif); the interaction takes place during G2 and M phase. Post-translationally, degraded when the spindle assembly checkpoint is activated during the G2-M transition. Degradation depends on the C-terminal PEST sequence. In terms of processing, phosphorylated just before cells enter into mitosis. Ubiquitinated by the anaphase-promoting complex (APC/C); leading to its degradation by the proteasome. In terms of tissue distribution, widely expressed, with expression detected in the heart, brain, placenta, lung, liver, skeletal muscle, kidney and pancreas.

It is found in the nucleus. The protein resides in the cytoplasm. The protein localises to the perinuclear region. It localises to the cytoskeleton. Its subcellular location is the microtubule organizing center. It is found in the centrosome. The protein resides in the centriole. Its function is as follows. Substrate recognition component of a SCF (SKP1-CUL1-F-box protein) E3 ubiquitin-protein ligase complex which mediates the ubiquitination and subsequent proteasomal degradation of target proteins. The SCF(CCNF) E3 ubiquitin-protein ligase complex is an integral component of the ubiquitin proteasome system (UPS) and links proteasome degradation to the cell cycle. Mediates the substrate recognition and the proteasomal degradation of various target proteins involved in the regulation of cell cycle progression and in the maintenance of genome stability. Mediates the ubiquitination and proteasomal degradation of CP110 during G2 phase, thereby acting as an inhibitor of centrosome reduplication. In G2, mediates the ubiquitination and subsequent degradation of ribonucleotide reductase RRM2, thereby maintaining a balanced pool of dNTPs and genome integrity. In G2, mediates the ubiquitination and proteasomal degradation of CDC6, thereby suppressing DNA re-replication and preventing genome instability. Involved in the ubiquitination and degradation of the substrate adapter CDH1 of the anaphase-promoting complex (APC/C), thereby acting as an antagonist of APC/C in regulating G1 progression and S phase entry. May play a role in the G2 cell cycle checkpoint control after DNA damage, possibly by promoting the ubiquitination of MYBL2/BMYB. The chain is Cyclin-F (CCNF) from Homo sapiens (Human).